The primary structure comprises 170 residues: Adenine phosphoribosyltransferase (170 aa).

It belongs to the purine/pyrimidine phosphoribosyltransferase family. In terms of assembly, homodimer.

The protein localises to the cytoplasm. The catalysed reaction is AMP + diphosphate = 5-phospho-alpha-D-ribose 1-diphosphate + adenine. The protein operates within purine metabolism; AMP biosynthesis via salvage pathway; AMP from adenine: step 1/1. Functionally, catalyzes a salvage reaction resulting in the formation of AMP, that is energically less costly than de novo synthesis. The sequence is that of Adenine phosphoribosyltransferase from Oceanobacillus iheyensis (strain DSM 14371 / CIP 107618 / JCM 11309 / KCTC 3954 / HTE831).